A 54-amino-acid chain; its full sequence is Large ribosomal subunit protein bL33 (54 aa).

Belongs to the bacterial ribosomal protein bL33 family.

The chain is Large ribosomal subunit protein bL33 from Thermobifida fusca (strain YX).